We begin with the raw amino-acid sequence, 35 residues long: Dermonecrotic toxin LgSicTox-beta-LOXN4 (35 aa).

Asp-20 provides a ligand contact to Mg(2+).

It belongs to the arthropod phospholipase D family. Class II subfamily. It depends on Mg(2+) as a cofactor. Post-translationally, contains 2 disulfide bonds. In terms of tissue distribution, expressed by the venom gland.

Its subcellular location is the secreted. The enzyme catalyses an N-(acyl)-sphingosylphosphocholine = an N-(acyl)-sphingosyl-1,3-cyclic phosphate + choline. It carries out the reaction an N-(acyl)-sphingosylphosphoethanolamine = an N-(acyl)-sphingosyl-1,3-cyclic phosphate + ethanolamine. The catalysed reaction is a 1-acyl-sn-glycero-3-phosphocholine = a 1-acyl-sn-glycero-2,3-cyclic phosphate + choline. It catalyses the reaction a 1-acyl-sn-glycero-3-phosphoethanolamine = a 1-acyl-sn-glycero-2,3-cyclic phosphate + ethanolamine. Functionally, dermonecrotic toxins cleave the phosphodiester linkage between the phosphate and headgroup of certain phospholipids (sphingolipid and lysolipid substrates), forming an alcohol (often choline) and a cyclic phosphate. This toxin acts on sphingomyelin (SM). It may also act on ceramide phosphoethanolamine (CPE), lysophosphatidylcholine (LPC) and lysophosphatidylethanolamine (LPE), but not on lysophosphatidylserine (LPS), and lysophosphatidylglycerol (LPG). It acts by transphosphatidylation, releasing exclusively cyclic phosphate products as second products. Induces dermonecrosis, hemolysis, increased vascular permeability, edema, inflammatory response, and platelet aggregation. The polypeptide is Dermonecrotic toxin LgSicTox-beta-LOXN4 (Loxosceles gaucho (Spider)).